The chain runs to 320 residues: GTPase Era (320 aa).

The region spanning 25 to 193 (HCGFIAIVGR…RKHVRNHLPK (169 aa)) is the Era-type G domain. The G1 stretch occupies residues 33–40 (GRPNVGKS). 33–40 (GRPNVGKS) contributes to the GTP binding site. Residues 59–63 (QTTRH) form a G2 region. Positions 80 to 83 (DTPG) are G3. GTP is bound by residues 80-84 (DTPGL) and 142-145 (NKVD). Residues 142 to 145 (NKVD) are G4. Residues 172 to 174 (ISA) are G5. A KH type-2 domain is found at 216-302 (VREKLMRFTG…YLETWVKVKS (87 aa)).

This sequence belongs to the TRAFAC class TrmE-Era-EngA-EngB-Septin-like GTPase superfamily. Era GTPase family. Monomer.

It is found in the cytoplasm. The protein resides in the cell inner membrane. An essential GTPase that binds both GDP and GTP, with rapid nucleotide exchange. Plays a role in 16S rRNA processing and 30S ribosomal subunit biogenesis and possibly also in cell cycle regulation and energy metabolism. The protein is GTPase Era of Vibrio parahaemolyticus serotype O3:K6 (strain RIMD 2210633).